The chain runs to 500 residues: Autophagy-related protein 18 (500 aa).

A WD 1 repeat occupies 3 to 41 (DSSPTINFINFNQTGTCISLGTSKGFKIFNCEPFGKFYS). Residues 174–197 (VGGNTETSFKRDQQDAGHSDISDL) form a disordered region. A compositionally biased stretch (basic and acidic residues) spans 181–194 (SFKRDQQDAGHSDI). WD repeat units lie at residues 243–283 (AHKG…KIYQ) and 288–327 (TYATRIYSISFSEDSQYLAVTGSSKTVHIFKLGHSMSNNK). The short motif at 284 to 288 (FRRGT) is the L/FRRG motif element. The disordered stretch occupies residues 328-358 (LDSDDSNMEEAAADDSSLDTTSIDALSDEEN). Positions 331–344 (DDSNMEEAAADDSS) are enriched in acidic residues. Position 354 is a phosphoserine (Ser354).

This sequence belongs to the WD repeat PROPPIN family. Component of the PI(3,5)P2 regulatory complex, composed of ATG18, FIG4, FAB1, VAC14 and VAC7. VAC14 nucleates the assembly of the complex and serves as a scaffold. Interacts with ATG2, ATG9 and VAC17. The ATG2-ATG18 complex is essential for autophagosome formation.

The protein localises to the preautophagosomal structure membrane. Its subcellular location is the vacuole membrane. The protein resides in the endosome membrane. Its function is as follows. The PI(3,5)P2 regulatory complex regulates both the synthesis and turnover of phosphatidylinositol 3,5-bisphosphate (PtdIns(3,5)P2). May negatively regulate FAB1 activity by sequestering or masking VAC7 from FAB1. Necessary for proper vacuole morphology. Plays an important role in osmotically-induced vacuole fragmentation. Required for cytoplasm to vacuole transport (Cvt) vesicle formation, pexophagy and starvation-induced autophagy. Involved in correct ATG9 trafficking to the pre-autophagosomal structure. Might also be involved in premeiotic DNA replication. With ATG2, protects ATG8 from ARG4-mediated cleavage. This chain is Autophagy-related protein 18 (ATG18), found in Saccharomyces cerevisiae (strain YJM789) (Baker's yeast).